Reading from the N-terminus, the 243-residue chain is DNA repair protein RecO (243 aa).

It belongs to the RecO family.

In terms of biological role, involved in DNA repair and RecF pathway recombination. The polypeptide is DNA repair protein RecO (Frankia casuarinae (strain DSM 45818 / CECT 9043 / HFP020203 / CcI3)).